Reading from the N-terminus, the 130-residue chain is Small ribosomal subunit protein uS9 (130 aa).

A disordered region spans residues 111–130; the sequence is VERKKPGLKKARKASQFSKR. Residues 116–130 are compositionally biased toward basic residues; that stretch reads PGLKKARKASQFSKR.

The protein belongs to the universal ribosomal protein uS9 family.

This is Small ribosomal subunit protein uS9 from Lactococcus lactis subsp. lactis (strain IL1403) (Streptococcus lactis).